A 133-amino-acid chain; its full sequence is Gamma-crystallin 1 (133 aa).

One can recognise a Beta/gamma crystallin 'Greek key' 2 domain in the interval tryptophan 1 to proline 41. The tract at residues glutamine 42 to serine 46 is connecting peptide. 2 Beta/gamma crystallin 'Greek key' domains span residues phenylalanine 47 to glutamate 87 and glycine 88 to glutamine 130.

It belongs to the beta/gamma-crystallin family. In terms of assembly, monomer.

Functionally, crystallins are the dominant structural components of the vertebrate eye lens. In Rana temporaria (European common frog), this protein is Gamma-crystallin 1.